An 81-amino-acid chain; its full sequence is D-alanyl carrier protein (81 aa).

The 81-residue stretch at 1-81 (MADEAIKNGV…KIIAKVEQAQ (81 aa)) folds into the Carrier domain. The residue at position 39 (serine 39) is an O-(pantetheine 4'-phosphoryl)serine.

The protein belongs to the DltC family. In terms of processing, 4'-phosphopantetheine is transferred from CoA to a specific serine of apo-DCP.

Its subcellular location is the cytoplasm. It participates in cell wall biogenesis; lipoteichoic acid biosynthesis. Functionally, carrier protein involved in the D-alanylation of lipoteichoic acid (LTA). The loading of thioester-linked D-alanine onto DltC is catalyzed by D-alanine--D-alanyl carrier protein ligase DltA. The DltC-carried D-alanyl group is further transferred to cell membrane phosphatidylglycerol (PG) by forming an ester bond, probably catalyzed by DltD. D-alanylation of LTA plays an important role in modulating the properties of the cell wall in Gram-positive bacteria, influencing the net charge of the cell wall. This chain is D-alanyl carrier protein, found in Lacticaseibacillus casei (strain BL23) (Lactobacillus casei).